The primary structure comprises 42 residues: Photosystem I reaction center subunit IX (42 aa).

A helical transmembrane segment spans residues 7 to 27; the sequence is YLSTAPVLATLWFGFLAGLLI.

It belongs to the PsaJ family.

The protein resides in the plastid. It is found in the chloroplast thylakoid membrane. Its function is as follows. May help in the organization of the PsaE and PsaF subunits. In Anthoceros angustus (Hornwort), this protein is Photosystem I reaction center subunit IX.